We begin with the raw amino-acid sequence, 617 residues long: Proline--tRNA ligase (617 aa).

The protein belongs to the class-II aminoacyl-tRNA synthetase family. ProS type 1 subfamily. Homodimer.

It is found in the cytoplasm. It catalyses the reaction tRNA(Pro) + L-proline + ATP = L-prolyl-tRNA(Pro) + AMP + diphosphate. Catalyzes the attachment of proline to tRNA(Pro) in a two-step reaction: proline is first activated by ATP to form Pro-AMP and then transferred to the acceptor end of tRNA(Pro). As ProRS can inadvertently accommodate and process non-cognate amino acids such as alanine and cysteine, to avoid such errors it has two additional distinct editing activities against alanine. One activity is designated as 'pretransfer' editing and involves the tRNA(Pro)-independent hydrolysis of activated Ala-AMP. The other activity is designated 'posttransfer' editing and involves deacylation of mischarged Ala-tRNA(Pro). The misacylated Cys-tRNA(Pro) is not edited by ProRS. In Streptococcus agalactiae serotype V (strain ATCC BAA-611 / 2603 V/R), this protein is Proline--tRNA ligase.